Reading from the N-terminus, the 1181-residue chain is HEAT repeat-containing protein 6 (1181 aa).

The stretch at 159-198 is one HEAT 1 repeat; that stretch reads PELLGNTGLLMKLSDLAQSDPEVRRAAVHCMANLCLSVPG. 2 disordered regions span residues 292-347 and 371-390; these read QYDG…PVTG and LDGSGAAEKDGVSSSFSSSS. The segment covering 300-312 has biased composition (polar residues); it reads KPQQSESSASRPT. The segment covering 313 to 325 has biased composition (basic residues); sequence LNKKKKSKVKPKK. 2 positions are modified to phosphoserine: S336 and S337. Residues S399 and S402 each carry the phosphoserine modification. 3 HEAT repeats span residues 452 to 490, 515 to 552, and 558 to 595; these read ELGSPQSVSLMTLTLKDPSPKTRACALQVLSAILEGSKQ, SIRELHRCLLLALVAESSSQTVTQIIKCLANLVSNAPY, and SLLTKVWNQIKPYIRHKDVNVRVSSLTLLGAIVSTHAP. The tract at residues 613–646 is disordered; that stretch reads NSNSATPHLSPPDWWKKAPAGPSLEETSVSSPKG. A Phosphothreonine modification is found at T618. The span at 637–646 shows a compositional bias: polar residues; sequence EETSVSSPKG. Phosphoserine is present on S643.

As to expression, amplified in breast cancer cell lines MCF-7 and BT-474.

Functionally, amplification-dependent oncogene. The protein is HEAT repeat-containing protein 6 (HEATR6) of Homo sapiens (Human).